The following is a 511-amino-acid chain: Pancreatic alpha-amylase (511 aa).

An N-terminal signal peptide occupies residues 1 to 15 (MKLFLLLSAFGFCWA). Gln-16 carries the post-translational modification Pyrrolidone carboxylic acid. 3 cysteine pairs are disulfide-bonded: Cys-43–Cys-101, Cys-85–Cys-130, and Cys-156–Cys-175. Ca(2+) is bound by residues Asn-115, Arg-173, and Asp-182. Arg-210 lines the chloride pocket. The active-site Nucleophile is the Asp-212. His-216 contacts Ca(2+). The Proton donor role is filled by Glu-248. Residues Asn-313 and Arg-352 each coordinate chloride. A disulfide bridge connects residues Cys-393 and Cys-399. N-linked (GlcNAc...) asparagine glycosylation occurs at Asn-427. The cysteines at positions 465 and 477 are disulfide-linked.

This sequence belongs to the glycosyl hydrolase 13 family. In terms of assembly, binds to the sea anemone inhibitor helianthamide and magnificamide. It depends on Ca(2+) as a cofactor. Chloride serves as cofactor.

It is found in the secreted. The protein localises to the extracellular space. It carries out the reaction Endohydrolysis of (1-&gt;4)-alpha-D-glucosidic linkages in polysaccharides containing three or more (1-&gt;4)-alpha-linked D-glucose units.. The sequence is that of Pancreatic alpha-amylase (AMY2) from Sus scrofa (Pig).